Here is a 207-residue protein sequence, read N- to C-terminus: Putative threonylcarbamoyl-AMP synthase (207 aa).

The region spanning 15 to 199 (EEERKKVLEF…KIISIREGVI (185 aa)) is the YrdC-like domain.

The protein belongs to the SUA5 family.

It is found in the cytoplasm. It carries out the reaction L-threonine + hydrogencarbonate + ATP = L-threonylcarbamoyladenylate + diphosphate + H2O. Required for the formation of a threonylcarbamoyl group on adenosine at position 37 (t(6)A37) in tRNAs that read codons beginning with adenine. Catalyzes the conversion of L-threonine, HCO(3)(-)/CO(2) and ATP to give threonylcarbamoyl-AMP (TC-AMP) as the acyladenylate intermediate, with the release of diphosphate. The polypeptide is Putative threonylcarbamoyl-AMP synthase (Methanocaldococcus jannaschii (strain ATCC 43067 / DSM 2661 / JAL-1 / JCM 10045 / NBRC 100440) (Methanococcus jannaschii)).